The primary structure comprises 101 residues: UPF0235 protein Cpha266_2081 (101 aa).

This sequence belongs to the UPF0235 family.

This chain is UPF0235 protein Cpha266_2081, found in Chlorobium phaeobacteroides (strain DSM 266 / SMG 266 / 2430).